We begin with the raw amino-acid sequence, 512 residues long: Perphorin-1 (512 aa).

The first 18 residues, 1–18 (MMRKALLALCVATAFAVA), serve as a signal peptide directing secretion. N-linked (GlcNAc...) asparagine glycosylation is found at Asn-49, Asn-96, Asn-118, Asn-378, Asn-381, Asn-403, and Asn-476.

The protein localises to the secreted. It localises to the extracellular space. It is found in the extracellular matrix. In terms of biological role, may be involved in conversion of asexual males and females to the sexual pathway. The protein is Perphorin-1 of Volvox carteri (Green alga).